The following is an 84-amino-acid chain: ATP synthase subunit c (84 aa).

2 helical membrane passes run 8–28 and 56–76; these read VAGM…GGGI and IIGS…AILL.

This sequence belongs to the ATPase C chain family. As to quaternary structure, F-type ATPases have 2 components, F(1) - the catalytic core - and F(0) - the membrane proton channel. F(1) has five subunits: alpha(3), beta(3), gamma(1), delta(1), epsilon(1). F(0) has three main subunits: a(1), b(2) and c(10-14). The alpha and beta chains form an alternating ring which encloses part of the gamma chain. F(1) is attached to F(0) by a central stalk formed by the gamma and epsilon chains, while a peripheral stalk is formed by the delta and b chains.

The protein resides in the cell membrane. In terms of biological role, f(1)F(0) ATP synthase produces ATP from ADP in the presence of a proton or sodium gradient. F-type ATPases consist of two structural domains, F(1) containing the extramembraneous catalytic core and F(0) containing the membrane proton channel, linked together by a central stalk and a peripheral stalk. During catalysis, ATP synthesis in the catalytic domain of F(1) is coupled via a rotary mechanism of the central stalk subunits to proton translocation. Functionally, key component of the F(0) channel; it plays a direct role in translocation across the membrane. A homomeric c-ring of between 10-14 subunits forms the central stalk rotor element with the F(1) delta and epsilon subunits. The polypeptide is ATP synthase subunit c (Clostridium novyi (strain NT)).